Reading from the N-terminus, the 284-residue chain is uncharacterized protein (284 aa).

The disordered stretch occupies residues 236 to 284 (IDITNEADSSEIIDSEPSNKDETEKPSAQETDPFDGKPVDIKDDELPFD). Composition is skewed to basic and acidic residues over residues 252-262 (PSNKDETEKPS) and 269-284 (FDGKPVDIKDDELPFD).

This is an uncharacterized protein from Bacillus subtilis (strain 168).